The chain runs to 657 residues: Single-minded homolog 2 (657 aa).

The region spanning 1–53 is the bHLH domain; that stretch reads MKEKSKNAAKTRREKENGEFYELAKLLPLPSAITSQLDKASIIRLTTSYLKMR. PAS domains are found at residues 77 to 147 and 218 to 288; these read AKEL…PPLH and PPSA…LVKG. The 71-residue stretch at 218–288 folds into the PAC domain; it reads PPSAITEIKL…YAHHLLLVKG (71 aa). Residues 336–657 form the Single-minded C-terminal domain; it reads EYKELQLSLD…GASVIITNGR (322 aa). Positions 354–364 are enriched in polar residues; sequence ESWRTTLSTSQ. 2 disordered regions span residues 354–387 and 612–641; these read ESWR…NPYP and LGSA…APGA. The short motif at 367-386 is the Nuclear localization signal element; sequence RKSAKPKNTKMKTKLRTNPY. Over residues 369–381 the composition is skewed to basic residues; it reads SAKPKNTKMKTKL.

In terms of assembly, efficient DNA binding requires dimerization with another bHLH protein. Heterodimer of SIM2 and ARNT. Transcripts were detected in high levels in kidney followed by skeletal muscle and lung. Low levels were found in testis, brain and heart. In early fetal development it is found in CNS, developing kidney, tongue epithelium and cartilage primordia.

It localises to the nucleus. Its function is as follows. Transcription factor that may be a master gene of CNS development in cooperation with Arnt. It may have pleiotropic effects in the tissues expressed during development. This is Single-minded homolog 2 (Sim2) from Mus musculus (Mouse).